The sequence spans 235 residues: 2-C-methyl-D-erythritol 4-phosphate cytidylyltransferase (235 aa).

The protein belongs to the IspD/TarI cytidylyltransferase family. IspD subfamily.

The catalysed reaction is 2-C-methyl-D-erythritol 4-phosphate + CTP + H(+) = 4-CDP-2-C-methyl-D-erythritol + diphosphate. Its pathway is isoprenoid biosynthesis; isopentenyl diphosphate biosynthesis via DXP pathway; isopentenyl diphosphate from 1-deoxy-D-xylulose 5-phosphate: step 2/6. In terms of biological role, catalyzes the formation of 4-diphosphocytidyl-2-C-methyl-D-erythritol from CTP and 2-C-methyl-D-erythritol 4-phosphate (MEP). The chain is 2-C-methyl-D-erythritol 4-phosphate cytidylyltransferase from Synechococcus sp. (strain JA-3-3Ab) (Cyanobacteria bacterium Yellowstone A-Prime).